Reading from the N-terminus, the 57-residue chain is Large ribosomal subunit protein bL32c (57 aa).

Residues 1–21 (MAVPKKRTSKSKKNLRKNTWK) form a disordered region.

The protein belongs to the bacterial ribosomal protein bL32 family.

The protein resides in the plastid. Its subcellular location is the chloroplast. This is Large ribosomal subunit protein bL32c from Stigeoclonium helveticum (Green alga).